Consider the following 563-residue polypeptide: Delta-1-pyrroline-5-carboxylate dehydrogenase, mitochondrial (563 aa).

A mitochondrion-targeting transit peptide spans 1–24; the sequence is MLLRSAALCRALLARRGRAAGLCR. Position 44 is a phosphoserine (Ser44). Residue Lys52 is modified to N6-acetyllysine. Lys93, Lys99, Lys114, Lys130, and Lys175 each carry N6-acetyllysine; alternate. N6-succinyllysine; alternate is present on residues Lys93, Lys99, Lys114, Lys130, and Lys175. NAD(+) is bound by residues Ser208, Lys233, and 286 to 290; that span reads GSVPT. Glu314 acts as the Proton acceptor in catalysis. The residue at position 318 (Lys318) is an N6-acetyllysine. Lys347 carries the post-translational modification N6-succinyllysine. Cys348 (nucleophile) is an active-site residue. An N6-acetyllysine mark is found at Lys365 and Lys376. The residue at position 395 (Lys395) is an N6-succinyllysine. NAD(+) is bound at residue Glu447. N6-acetyllysine; alternate is present on Lys509. An N6-succinyllysine; alternate modification is found at Lys509. Ser513 lines the substrate pocket. Position 531 is an N6-acetyllysine (Lys531).

The protein belongs to the aldehyde dehydrogenase family. In terms of assembly, homodimer.

The protein resides in the mitochondrion matrix. The catalysed reaction is L-glutamate 5-semialdehyde + NAD(+) + H2O = L-glutamate + NADH + 2 H(+). Its pathway is amino-acid degradation; L-proline degradation into L-glutamate; L-glutamate from L-proline: step 2/2. In terms of biological role, irreversible conversion of delta-1-pyrroline-5-carboxylate (P5C), derived either from proline or ornithine, to glutamate. This is a necessary step in the pathway interconnecting the urea and tricarboxylic acid cycles. The preferred substrate is glutamic gamma-semialdehyde, other substrates include succinic, glutaric and adipic semialdehydes. The chain is Delta-1-pyrroline-5-carboxylate dehydrogenase, mitochondrial (ALDH4A1) from Bos taurus (Bovine).